A 317-amino-acid chain; its full sequence is Ribosomal protein L11 methyltransferase (317 aa).

Thr-158, Gly-179, Asp-201, and Asn-244 together coordinate S-adenosyl-L-methionine.

It belongs to the methyltransferase superfamily. PrmA family.

The protein resides in the cytoplasm. The catalysed reaction is L-lysyl-[protein] + 3 S-adenosyl-L-methionine = N(6),N(6),N(6)-trimethyl-L-lysyl-[protein] + 3 S-adenosyl-L-homocysteine + 3 H(+). In terms of biological role, methylates ribosomal protein L11. This chain is Ribosomal protein L11 methyltransferase, found in Streptococcus equi subsp. equi (strain 4047).